A 383-amino-acid polypeptide reads, in one-letter code: tRNA-specific 2-thiouridylase MnmA (383 aa).

ATP contacts are provided by residues 31 to 38 (GLSGGVDS) and Leu57. Cys118 functions as the Nucleophile in the catalytic mechanism. A disulfide bridge connects residues Cys118 and Cys217. Gly143 lines the ATP pocket. Positions 167-169 (KDQ) are interaction with tRNA. Cys217 functions as the Cysteine persulfide intermediate in the catalytic mechanism. The interaction with tRNA stretch occupies residues 322-323 (RY).

This sequence belongs to the MnmA/TRMU family.

The protein resides in the cytoplasm. It catalyses the reaction S-sulfanyl-L-cysteinyl-[protein] + uridine(34) in tRNA + AH2 + ATP = 2-thiouridine(34) in tRNA + L-cysteinyl-[protein] + A + AMP + diphosphate + H(+). In terms of biological role, catalyzes the 2-thiolation of uridine at the wobble position (U34) of tRNA, leading to the formation of s(2)U34. The sequence is that of tRNA-specific 2-thiouridylase MnmA from Synechococcus sp. (strain RCC307).